A 468-amino-acid polypeptide reads, in one-letter code: 3-isopropylmalate dehydratase large subunit (468 aa).

C346, C406, and C409 together coordinate [4Fe-4S] cluster.

It belongs to the aconitase/IPM isomerase family. LeuC type 1 subfamily. As to quaternary structure, heterodimer of LeuC and LeuD. [4Fe-4S] cluster is required as a cofactor.

It catalyses the reaction (2R,3S)-3-isopropylmalate = (2S)-2-isopropylmalate. The protein operates within amino-acid biosynthesis; L-leucine biosynthesis; L-leucine from 3-methyl-2-oxobutanoate: step 2/4. Functionally, catalyzes the isomerization between 2-isopropylmalate and 3-isopropylmalate, via the formation of 2-isopropylmaleate. In Pseudoalteromonas atlantica (strain T6c / ATCC BAA-1087), this protein is 3-isopropylmalate dehydratase large subunit.